Here is a 370-residue protein sequence, read N- to C-terminus: Phospho-2-dehydro-3-deoxyheptonate aldolase, phenylalanine-inhibited (370 aa).

The protein belongs to the class-I DAHP synthase family.

The catalysed reaction is D-erythrose 4-phosphate + phosphoenolpyruvate + H2O = 7-phospho-2-dehydro-3-deoxy-D-arabino-heptonate + phosphate. It participates in metabolic intermediate biosynthesis; chorismate biosynthesis; chorismate from D-erythrose 4-phosphate and phosphoenolpyruvate: step 1/7. With respect to regulation, inhibited by phenyalanine. Its function is as follows. Stereospecific condensation of phosphoenolpyruvate (PEP) and D-erythrose-4-phosphate (E4P) giving rise to 3-deoxy-D-arabino-heptulosonate-7-phosphate (DAHP). The sequence is that of Phospho-2-dehydro-3-deoxyheptonate aldolase, phenylalanine-inhibited (ARO3) from Saccharomyces cerevisiae (strain ATCC 204508 / S288c) (Baker's yeast).